The primary structure comprises 488 residues: Dihydrolipoyl dehydrogenase, mitochondrial (488 aa).

The N-terminal 25 residues, 1 to 25, are a transit peptide targeting the mitochondrion; that stretch reads MLRINRISNLRTFGQRFFSTEQQDV. Residues 52–61, lysine 70, glycine 134, and 163–165 each bind FAD; these read EKRGKLGGTC and TGS. Cysteines 61 and 66 form a disulfide. Residues 200–207, glutamate 223, valine 257, and glycine 294 contribute to the NAD(+) site; that span reads GGGVIGLE. Residues aspartate 335 and 341–344 contribute to the FAD site; that span reads MLAH. Histidine 467 functions as the Proton acceptor in the catalytic mechanism.

The protein belongs to the class-I pyridine nucleotide-disulfide oxidoreductase family. It depends on FAD as a cofactor.

Its subcellular location is the mitochondrion matrix. The enzyme catalyses N(6)-[(R)-dihydrolipoyl]-L-lysyl-[protein] + NAD(+) = N(6)-[(R)-lipoyl]-L-lysyl-[protein] + NADH + H(+). This is Dihydrolipoyl dehydrogenase, mitochondrial (lpd) from Dictyostelium discoideum (Social amoeba).